The following is a 378-amino-acid chain: Ribosomal RNA large subunit methyltransferase G (378 aa).

Belongs to the methyltransferase superfamily. RlmG family.

Its subcellular location is the cytoplasm. It catalyses the reaction guanosine(1835) in 23S rRNA + S-adenosyl-L-methionine = N(2)-methylguanosine(1835) in 23S rRNA + S-adenosyl-L-homocysteine + H(+). In terms of biological role, specifically methylates the guanine in position 1835 (m2G1835) of 23S rRNA. This Enterobacter sp. (strain 638) protein is Ribosomal RNA large subunit methyltransferase G.